An 831-amino-acid chain; its full sequence is Valine--tRNA ligase (831 aa).

The 'HIGH' region motif lies at 77 to 87; it reads PFTSGELHMGH. The short motif at 564–568 is the 'KMSKS' region element; that stretch reads RMSKS. Residue lysine 567 coordinates ATP.

This sequence belongs to the class-I aminoacyl-tRNA synthetase family. ValS type 2 subfamily.

It localises to the cytoplasm. The enzyme catalyses tRNA(Val) + L-valine + ATP = L-valyl-tRNA(Val) + AMP + diphosphate. Catalyzes the attachment of valine to tRNA(Val). As ValRS can inadvertently accommodate and process structurally similar amino acids such as threonine, to avoid such errors, it has a 'posttransfer' editing activity that hydrolyzes mischarged Thr-tRNA(Val) in a tRNA-dependent manner. In Sulfolobus acidocaldarius (strain ATCC 33909 / DSM 639 / JCM 8929 / NBRC 15157 / NCIMB 11770), this protein is Valine--tRNA ligase.